A 230-amino-acid polypeptide reads, in one-letter code: Large ribosomal subunit protein uL1 (230 aa).

It belongs to the universal ribosomal protein uL1 family. As to quaternary structure, part of the 50S ribosomal subunit.

Binds directly to 23S rRNA. The L1 stalk is quite mobile in the ribosome, and is involved in E site tRNA release. Functionally, protein L1 is also a translational repressor protein, it controls the translation of the L11 operon by binding to its mRNA. The polypeptide is Large ribosomal subunit protein uL1 (Desulfitobacterium hafniense (strain DSM 10664 / DCB-2)).